Reading from the N-terminus, the 148-residue chain is Hemoglobin subunit beta (148 aa).

Residues 3 to 148 form the Globin domain; the sequence is DWTDAERSAI…VVSALGRQYH (146 aa). Histidine 64 and histidine 93 together coordinate heme b.

This sequence belongs to the globin family. As to quaternary structure, heterotetramer of two alpha chains and two beta chains. Red blood cells.

Functionally, involved in oxygen transport from gills to the various peripheral tissues. This chain is Hemoglobin subunit beta (hbb), found in Salmo salar (Atlantic salmon).